The sequence spans 184 residues: Adenine phosphoribosyltransferase (184 aa).

This sequence belongs to the purine/pyrimidine phosphoribosyltransferase family. Homodimer.

It is found in the cytoplasm. It catalyses the reaction AMP + diphosphate = 5-phospho-alpha-D-ribose 1-diphosphate + adenine. Its pathway is purine metabolism; AMP biosynthesis via salvage pathway; AMP from adenine: step 1/1. Its function is as follows. Catalyzes a salvage reaction resulting in the formation of AMP, that is energically less costly than de novo synthesis. The polypeptide is Adenine phosphoribosyltransferase (Myxococcus xanthus (strain DK1622)).